The following is a 239-amino-acid chain: Protein LIFEGUARD 2 (239 aa).

The next 7 membrane-spanning stretches (helical) occupy residues 41 to 61 (LLVTIAVAATVVKVHSISVFF), 66 to 86 (AGFALYILLILTPLIVMCPLY), 96 to 116 (YLLLGIFTVALAFAVGLTCAF), 121 to 141 (VILESVILTAVVVISLTLYTF), 156 to 176 (FLFGAVIVLMVFSFIQILFPL), 179 to 199 (ISVMIYGCLASIIFCGYIVYD), and 213 to 233 (IWAAVSLYLDVINLFLSLLTL).

The protein belongs to the BI1 family. In terms of tissue distribution, expressed in seedlings, roots, leaves, inflorescences and flowers.

Its subcellular location is the membrane. Functionally, regulates the brassinosteroid (BR) signaling pathway that mediates cell elongation and organ morphogenesis. Its function is as follows. (Microbial infection) Facilitates the development of the powdery mildew fungus E.cruciferarum. (Microbial infection) May prevent cell death upon A.alternata f.sp. lycopersici (AAL) toxin treatment. The polypeptide is Protein LIFEGUARD 2 (Arabidopsis thaliana (Mouse-ear cress)).